The primary structure comprises 1039 residues: MSLLMAHRKSKSSQRKLRNRSSSLTPQKRRIRASKGSHDTILSIRNETSSLEALSRTIQWTLARYKYHRYLVSLSPRTPSQLPDYVLAANDSLENAMKWQIASISAVGGKIASHNKNTYTSIDQITDYSASLERANAEIRTCMWSFSSASQALFSLARTKGLDAQRRWMQGSLYVANPSISNIILYSKGIASEGDRHPSDVLEVLNRFIFSKFADEELNLLLYYLTFNPLLNVEVASKLSPLLLYFPVVDQYEFLANLFTSDQSLSKPDVLPFGRDFVEILSSTGDWRASPKAALAERVEPSRFTIPLLNRWCGYLLDSIGILDGVSSAPDREFDIALANEFFHQPQSPRAYLASSIFAMKSAQTLADVKSALYKREIANVHFEKVEQQIAPPDQRFIDYSFAAVAAEVGISESVYENRELFRIACICGISEGRTLDTLILLCEYTNADPFGSSYFPADLFSASVTEDEVARIGHDPRVAIGLSRVAASLGDEGQNLVYIAVEQHLNVRGMSKPSEIVADSAVDVAFLREACTSSSLRQSLEFLSKAEMEDERIQVLFNLAQVDPANEDDYIEEVHTIIGQQTIEELLQRFHVGKVQCDEQALSTWALIELSPKFNRLKDFIDAGLPPVEKDADIQFIAHLTSGKSETFTFKVPNNESLDIARTILAELNSKYALDPRYGVDSYLSLGMRHGAVEAHLQSPLSAENILTAKEPLGYPDDCFWTRYFIDNGFECYGEKIGPVLATFSEKFDNKLEAIKNDLLQVRRPDKPEGLIVADWSEASVLSACARFAEVPDFEAFIAEFTLIFWANVEGNLAAAREFIENVLSNELNELLDELEANVRQATGQQRLAPFSDALMRARQELGNAVNDVSTWHNVARSTDVEPLGLVEIISAAQKIVCRLYPDFEPRVTFSGDTGITVTYSLHILIEVFKALFTNVYAHSEVENPAVDVHMAMTVEDALDVEFVSDCNDMGKAERAALDANEKIRTGEYEKKLPKEGGSGLAKVARSTLRDGKPNTVISVDHSTCKFHVKMAFKIIQI.

Residues 1 to 19 show a composition bias toward basic residues; sequence MSLLMAHRKSKSSQRKLRN. The tract at residues 1–38 is disordered; sequence MSLLMAHRKSKSSQRKLRNRSSSLTPQKRRIRASKGSH.

This is an uncharacterized protein from Sinorhizobium fredii (strain NBRC 101917 / NGR234).